The primary structure comprises 196 residues: Cell division protein SepF (196 aa).

Positions 15–80 (VEDDEEFNEP…PKRSASTFSK (66 aa)) are disordered. Positions 56-79 (RPAQSTPKPQAQTAAPKRSASTFS) are enriched in polar residues.

This sequence belongs to the SepF family. Homodimer. Interacts with FtsZ.

The protein resides in the cytoplasm. Cell division protein that is part of the divisome complex and is recruited early to the Z-ring. Probably stimulates Z-ring formation, perhaps through the cross-linking of FtsZ protofilaments. Its function overlaps with FtsA. The polypeptide is Cell division protein SepF (Lactococcus lactis subsp. cremoris (strain SK11)).